The sequence spans 219 residues: Elongation factor Ts (219 aa).

The involved in Mg(2+) ion dislocation from EF-Tu stretch occupies residues 82 to 85; that stretch reads TDFV.

This sequence belongs to the EF-Ts family.

It is found in the cytoplasm. In terms of biological role, associates with the EF-Tu.GDP complex and induces the exchange of GDP to GTP. It remains bound to the aminoacyl-tRNA.EF-Tu.GTP complex up to the GTP hydrolysis stage on the ribosome. The sequence is that of Elongation factor Ts from Anaeromyxobacter dehalogenans (strain 2CP-C).